Consider the following 129-residue polypeptide: Glycine cleavage system H protein (129 aa).

In terms of domain architecture, Lipoyl-binding spans 24 to 106 (TYTVGITEHA…YAGGWIFKIK (83 aa)). The residue at position 65 (K65) is an N6-lipoyllysine.

Belongs to the GcvH family. In terms of assembly, the glycine cleavage system is composed of four proteins: P, T, L and H. The cofactor is (R)-lipoate.

Functionally, the glycine cleavage system catalyzes the degradation of glycine. The H protein shuttles the methylamine group of glycine from the P protein to the T protein. The sequence is that of Glycine cleavage system H protein from Escherichia coli O127:H6 (strain E2348/69 / EPEC).